A 624-amino-acid chain; its full sequence is Probable potassium transport system protein Kup 1 (624 aa).

12 helical membrane passes run 10–30 (LALG…LYAL), 48–68 (LSLI…MIIF), 94–114 (PLFY…GMLT), 133–153 (LYPY…SLQA), 159–179 (IGYL…ILGI), 210–230 (FLLG…ADIG), 242–262 (FFIA…NLIV), 270–290 (PFFM…ATVA), 331–351 (IYVP…CLAF), 363–383 (IAVN…AVSI), 388–408 (TFNV…FLGA), and 413–433 (FITG…IMYS).

The protein belongs to the HAK/KUP transporter (TC 2.A.72) family.

It is found in the cell inner membrane. It catalyses the reaction K(+)(in) + H(+)(in) = K(+)(out) + H(+)(out). In terms of biological role, transport of potassium into the cell. Likely operates as a K(+):H(+) symporter. The chain is Probable potassium transport system protein Kup 1 from Legionella pneumophila subsp. pneumophila (strain Philadelphia 1 / ATCC 33152 / DSM 7513).